A 31-amino-acid polypeptide reads, in one-letter code: Cycloviolin-A (31 aa).

Positions Gly1–Asn31 form a cross-link, cyclopeptide (Gly-Asn). Cystine bridges form between Cys5–Cys21, Cys9–Cys23, and Cys14–Cys28.

This is a cyclic peptide.

Probably participates in a plant defense mechanism. Has anti-HIV activity. This is Cycloviolin-A from Leonia cymosa (Sacha uba).